Here is a 258-residue protein sequence, read N- to C-terminus: Axonemal dynein light intermediate polypeptide 1 (258 aa).

2 disordered regions span residues 1 to 60 (MIPP…CVPD) and 207 to 231 (VNEQ…EEKK). The span at 34-44 (SPQQPGPSGSA) shows a compositional bias: low complexity. Positions 176-255 (MRKALQAEQG…LKAQLEGIIA (80 aa)) form a coiled coil.

Belongs to the inner dynein arm light chain family. As to quaternary structure, interacts with CFAP45. Interacts with DYNC1H1. In terms of tissue distribution, expressed in many tissues. A smaller 0.9 kb and a larger 2.5 kb transcripts were detected at the highest level in the testis, at medium levels in the prostate, heart, liver, lung and pancreas, at low levels in the ovary, skeletal muscle and small intestine. Not detected in spleen, colon epithelium, thymus or peripheral blood leukocytes. The 0.9 kb transcript is expressed at a 20-fold higher level than the 2.5 kb transcript in the testis. Expressed in spermatozoa and airway epithelial cells (at protein level).

Its subcellular location is the cell projection. The protein resides in the cilium. It localises to the flagellum. It is found in the dynein axonemal particle. The protein localises to the cytoplasm. Functionally, involved in sperm flagellum assembly. The chain is Axonemal dynein light intermediate polypeptide 1 from Homo sapiens (Human).